The primary structure comprises 459 residues: MLKIFNTLTREKEIFKPIHENKVGMYVCGVTVYDLCHIGHGRTFVCFDVIARYLRSLGYDLTYVRNITDVDDKIIKRALENKETCDQLVDRMVQEMYKDFDALNVLRPDFEPRATHHIPEIIEIVEKLIKRGHAYVADNGDVMFDVESFKEYGKLSRQDLEQLQAGARIEINEIKKNPMDFVLWKMSKENEPSWASPWGAGRPGWHIECSAMNCKQLGEHFDIHGGGSDLMFPHHENEIAQSCCAHGGQYVNYWIHSGMIMVDKEKMSKSLGNFFTIRDVLNHYNAEAVRYFLLTAHYRSQLNYSEENLNLAQGALERLYTALRGTDQSAVVFGGENFVETFREAMDDDFNTPNALSVLFEMAREINKLKTEDAEKANGLAARLRELGAILGLLQQDPEKFLQAGSDDDEVAKIEALIKQRNEARAAKDWATADAARNELIAMGIVLEDGPNGTTWRKQ.

Cys-28 provides a ligand contact to Zn(2+). The 'HIGH' region motif lies at 30–40 (VTVYDLCHIGH). Positions 209, 234, and 238 each coordinate Zn(2+). Positions 266–270 (KMSKS) match the 'KMSKS' region motif. ATP is bound at residue Lys-269.

It belongs to the class-I aminoacyl-tRNA synthetase family. In terms of assembly, monomer. Requires Zn(2+) as cofactor.

It localises to the cytoplasm. It catalyses the reaction tRNA(Cys) + L-cysteine + ATP = L-cysteinyl-tRNA(Cys) + AMP + diphosphate. This chain is Cysteine--tRNA ligase, found in Haemophilus influenzae (strain 86-028NP).